Reading from the N-terminus, the 205-residue chain is Guanylyl cyclase-activating protein 1 (205 aa).

Glycine 2 carries the N-myristoyl glycine lipid modification. Deamidated asparagine is present on asparagine 3. EF-hand domains are found at residues 14-49, 51-86, 87-122, and 131-166; these read SSTE…KNLS, WASQ…VLKG, KVEQ…IRAI, and TAEE…DQML. Residues aspartate 64, asparagine 66, aspartate 68, tyrosine 70, glutamate 75, aspartate 100, aspartate 102, asparagine 104, cysteine 106, glutamate 111, aspartate 144, asparagine 146, aspartate 148, glutamate 150, and glutamate 155 each coordinate Ca(2+). Residues 185–205 are disordered; it reads NGEQDEEGASGRETEAAEADG.

Homodimer. Detected in the retina. Detected in rod and cone photoreceptor cells (at protein level). Also present in certain pinealocytes.

It is found in the membrane. The protein resides in the photoreceptor inner segment. Its subcellular location is the cell projection. It localises to the cilium. The protein localises to the photoreceptor outer segment. Stimulates retinal guanylyl cyclase when free calcium ions concentration is low and inhibits guanylyl cyclase when free calcium ions concentration is elevated. This Ca(2+)-sensitive regulation of retinal guanylyl cyclase is a key event in recovery of the dark state of rod photoreceptors following light exposure. May be involved in cone photoreceptor light response and recovery of response in bright light. This Bos taurus (Bovine) protein is Guanylyl cyclase-activating protein 1 (GUCA1A).